Reading from the N-terminus, the 605-residue chain is MALRKGGLALALLLLSWVALGPRSLEGAEPGTPGEAEGPACPATCACSYDDEVNELSVFCSSRNLTRLPDGIPGGTQALWLDSNNLSSIPPAAFRNLSSLAFLNLQGGQLGSLEPQALLGLENLCHLHLERNQLRSLAVGTFAYTPALALLGLSNNRLSRLEDGLFEGLGNLWDLNLGWNSLAVLPDAAFRGLGGLRELVLAGNRLAYLQPALFSGLAELRELDLSRNALRAIKANVFAQLPRLQKLYLDRNLIAAVAPGAFLGLKALRWLDLSHNRVAGLLEDTFPGLLGLRVLRLSHNAIASLRPRTFEDLHFLEELQLGHNRIRQLAERSFEGLGQLEVLTLDHNQLQEVKVGAFLGLTNVAVMNLSGNCLRNLPEQVFRGLGKLHSLHLEGSCLGRIRPHTFAGLSGLRRLFLKDNGLVGIEEQSLWGLAELLELDLTSNQLTHLPHQLFQGLGKLEYLLLSHNRLAELPADALGPLQRAFWLDVSHNRLEALPGSLLASLGRLRYLNLRNNSLRTFTPQPPGLERLWLEGNPWDCSCPLKALRDFALQNPSAVPRFVQAICEGDDCQPPVYTYNNITCASPPEVAGLDLRDLGEAHFAPC.

Residues 1–27 form the signal peptide; sequence MALRKGGLALALLLLSWVALGPRSLEG. One can recognise an LRRNT domain in the interval 32–74; it reads TPGEAEGPACPATCACSYDDEVNELSVFCSSRNLTRLPDGIPG. 2 cysteine pairs are disulfide-bonded: Cys41/Cys47 and Cys45/Cys60. Residues Asn64, Asn85, and Asn96 are each glycosylated (N-linked (GlcNAc...) asparagine). 19 LRR repeats span residues 75 to 96, 99 to 120, 123 to 144, 147 to 168, 171 to 192, 195 to 216, 219 to 240, 243 to 264, 267 to 288, 291 to 312, 315 to 336, 339 to 360, 363 to 384, 387 to 408, 411 to 432, 435 to 456, 459 to 480, 483 to 504, and 507 to 528; these read GTQA…AFRN, SLAF…ALLG, NLCH…TFAY, ALAL…LFEG, NLWD…AFRG, GLRE…LFSG, ELRE…VFAQ, RLQK…AFLG, ALRW…TFPG, GLRV…TFED, FLEE…SFEG, QLEV…AFLG, NVAV…VFRG, KLHS…TFAG, GLRR…SLWG, ELLE…LFQG, KLEY…ALGP, RAFW…LLAS, and RLRY…PPGL. N-linked (GlcNAc...) asparagine glycosylation occurs at Asn368. Asn515 carries an N-linked (GlcNAc...) asparagine glycan. One can recognise an LRRCT domain in the interval 536–605; it reads NPWDCSCPLK…DLGEAHFAPC (70 aa). Intrachain disulfides connect Cys540–Cys583, Cys542–Cys605, and Cys566–Cys571. N-linked (GlcNAc...) asparagine glycosylation occurs at Asn580.

Forms a ternary complex with IGF1 and IGFBP3.

It localises to the secreted. The protein localises to the extracellular space. In terms of biological role, involved in protein-protein interactions that result in protein complexes, receptor-ligand binding or cell adhesion. This Papio hamadryas (Hamadryas baboon) protein is Insulin-like growth factor-binding protein complex acid labile subunit (IGFALS).